The following is a 590-amino-acid chain: Transcription factor GTE7 (590 aa).

The tract at residues 125–160 (LNNFTGEKNDLGPKKKKQKKNVSGLKRSNQFGPSDP) is disordered. The Bromo domain maps to 164-270 (KLLAGMLNTC…DHFDGMFNPA (107 aa)). Disordered stretches follow at residues 282 to 400 (TGSS…KDPN) and 476 to 590 (RQGF…EAQC). The span at 288-298 (PEPDFKPDFKQ) shows a compositional bias: basic and acidic residues. Pro residues predominate over residues 347–369 (PSPPPPPPVIQPELPQPQPPPPQ). In terms of domain architecture, NET spans 394–475 (PKAKDPNKRL…NYKKMASKIK (82 aa)). Residues 498–508 (SAEKRTRRGDA) show a composition bias toward basic and acidic residues. Positions 509–521 (GEEDVDIGEDIPI) are enriched in acidic residues. Over residues 537–562 (AAAASSGSSSSGSSSSSGGSSSSSDS) the composition is skewed to low complexity.

The protein resides in the nucleus. In Arabidopsis thaliana (Mouse-ear cress), this protein is Transcription factor GTE7 (GTE7).